The following is a 462-amino-acid chain: Squalene synthase LSS (462 aa).

The NADP(+) site is built by Arg-48 and Arg-73. Mg(2+) is bound by residues Asp-76, Glu-79, and Asp-80. NADP(+)-binding residues include Arg-214, Lys-314, and Arg-316. 2 helical membrane-spanning segments follow: residues 399 to 419 and 436 to 456; these read LVLVLGLGYCVYAFNLLPLLW and LGLPHQIIAVFCVLTAGYQVF.

It belongs to the phytoene/squalene synthase family. Requires Mg(2+) as cofactor.

The protein localises to the membrane. It catalyses the reaction 2 (2E,6E)-farnesyl diphosphate + NADH + H(+) = squalene + 2 diphosphate + NAD(+). It carries out the reaction 2 (2E,6E)-farnesyl diphosphate + NADPH + H(+) = squalene + 2 diphosphate + NADP(+). Converts farnesyl diphosphate (FPP) into squalene, a precursor for sterol biosynthesis in eukaryotes. This Botryococcus braunii (Green alga) protein is Squalene synthase LSS.